Here is a 126-residue protein sequence, read N- to C-terminus: Large ribosomal subunit protein bL19 (126 aa).

It belongs to the bacterial ribosomal protein bL19 family.

Its function is as follows. This protein is located at the 30S-50S ribosomal subunit interface and may play a role in the structure and function of the aminoacyl-tRNA binding site. The sequence is that of Large ribosomal subunit protein bL19 from Bordetella petrii (strain ATCC BAA-461 / DSM 12804 / CCUG 43448).